Here is a 516-residue protein sequence, read N- to C-terminus: L-amino-acid oxidase (516 aa).

The N-terminal stretch at 1–18 (MNVFFMFSLLFLAALGSC) is a signal peptide. Cysteines 28 and 191 form a disulfide. FAD-binding positions include 61-62 (MA), 81-82 (EA), Arg89, and 105-108 (GPMR). Arg108 contacts substrate. N-linked (GlcNAc...) (complex) asparagine glycosylation is present at Asn190. His241 provides a ligand contact to substrate. Val279 contributes to the FAD binding site. A disulfide bridge links Cys349 with Cys430. An N-linked (GlcNAc...) (complex) asparagine glycan is attached at Asn379. Tyr390 is a substrate binding site. FAD is bound by residues Glu475 and 482–487 (GWIDST). 482 to 483 (GW) serves as a coordination point for substrate.

In terms of assembly, homodimer; non-covalently linked. FAD serves as cofactor. Post-translationally, N-glycosylated at Asn-190 and Asn-379 with bis-sialylated, biantennary, core-fucosylated dodecasaccharide (composed of N-acetylglucosamine, fucose, mannose, galactose, and sialic acid residues). In terms of tissue distribution, expressed by the venom gland.

It is found in the secreted. The catalysed reaction is an L-alpha-amino acid + O2 + H2O = a 2-oxocarboxylate + H2O2 + NH4(+). It carries out the reaction L-leucine + O2 + H2O = 4-methyl-2-oxopentanoate + H2O2 + NH4(+). It catalyses the reaction L-phenylalanine + O2 + H2O = 3-phenylpyruvate + H2O2 + NH4(+). The enzyme catalyses L-tryptophan + O2 + H2O = indole-3-pyruvate + H2O2 + NH4(+). The catalysed reaction is L-methionine + O2 + H2O = 4-methylsulfanyl-2-oxobutanoate + H2O2 + NH4(+). It carries out the reaction L-isoleucine + O2 + H2O = (S)-3-methyl-2-oxopentanoate + H2O2 + NH4(+). It catalyses the reaction L-arginine + O2 + H2O = 5-guanidino-2-oxopentanoate + H2O2 + NH4(+). The enzyme catalyses L-aspartate + O2 + H2O = oxaloacetate + H2O2 + NH4(+). The catalysed reaction is L-histidine + O2 + H2O = 3-(imidazol-5-yl)pyruvate + H2O2 + NH4(+). It carries out the reaction L-2-aminohexanoate + O2 + H2O = 2-oxohexanoate + H2O2 + NH4(+). It catalyses the reaction L-2-aminopentanoate + O2 + H2O = 2-oxopentanoate + H2O2 + NH4(+). In terms of biological role, catalyzes an oxidative deamination of predominantly hydrophobic and aromatic L-amino acids, thus producing hydrogen peroxide that may contribute to the diverse toxic effects of this enzyme. Shows high affinity for L-Phe, L-Trp, L-Met, L-Leu, and L-Ile, moderate affinity for L-Arg, L-Asp, and L-His, and very low affinity for L-Gln, L-Lys, and L-Ala. Also shows high activity on L-norleucine (L-2-aminohexanoate), and L-norvaline (L-2-aminopentanoate) and a weak activity on L-ornithine and L-aminobutyric acid. Also exhibits diverse biological activities, such as hemorrhage, hemolysis, edema, apoptosis of vascular endothelial cells or tumor cell lines, and antiparasitic activities, as well as regulation of platelet aggregation. Its effect on platelets is controversial, since it either induces aggregation or inhibits agonist-induced aggregation. These different effects are probably due to different experimental conditions. A possible explanation of high efficacy it that LAAO may bind to target cells through its sialylated glycan moiety that would bind to sialic acid-binding lectins (siglec) on target cells. This interaction may result in production of locally high concentrations of hydrogen peroxide in or near the binding interface, leading, in turn to oxidative damage of the siglec or another adjacent cell structural elements. The polypeptide is L-amino-acid oxidase (Calloselasma rhodostoma (Malayan pit viper)).